The chain runs to 268 residues: Tryptophan synthase alpha chain (268 aa).

Residues Glu47 and Asp58 each act as proton acceptor in the active site.

This sequence belongs to the TrpA family. Tetramer of two alpha and two beta chains.

It carries out the reaction (1S,2R)-1-C-(indol-3-yl)glycerol 3-phosphate + L-serine = D-glyceraldehyde 3-phosphate + L-tryptophan + H2O. It participates in amino-acid biosynthesis; L-tryptophan biosynthesis; L-tryptophan from chorismate: step 5/5. Its function is as follows. The alpha subunit is responsible for the aldol cleavage of indoleglycerol phosphate to indole and glyceraldehyde 3-phosphate. The sequence is that of Tryptophan synthase alpha chain from Chlorobium phaeobacteroides (strain BS1).